A 78-amino-acid chain; its full sequence is Acyl carrier protein (78 aa).

The Carrier domain maps to 2–77 (SDVLERVSKI…DAVKFISEKV (76 aa)). Ser-37 carries the post-translational modification O-(pantetheine 4'-phosphoryl)serine.

Belongs to the acyl carrier protein (ACP) family. In terms of processing, 4'-phosphopantetheine is transferred from CoA to a specific serine of apo-ACP by AcpS. This modification is essential for activity because fatty acids are bound in thioester linkage to the sulfhydryl of the prosthetic group.

The protein localises to the cytoplasm. The protein operates within lipid metabolism; fatty acid biosynthesis. Carrier of the growing fatty acid chain in fatty acid biosynthesis. In Maricaulis maris (strain MCS10) (Caulobacter maris), this protein is Acyl carrier protein.